The primary structure comprises 99 residues: MMAMNEIELMQIKDFVKDMDKNQRIVYYEQKKKSVGIAVLLSFIIPGAGQMYLGRVGKGIILLLTCWLIIPWIYSIYDAYKSAKDYNAQLYSIIFSKDD.

Residues 32 to 79 (KKSVGIAVLLSFIIPGAGQMYLGRVGKGIILLLTCWLIIPWIYSIYDA) enclose the TM2 domain. 2 helical membrane passes run 34-54 (SVGI…MYLG) and 56-76 (VGKG…IYSI).

It localises to the cell membrane. This is an uncharacterized protein from Methanocaldococcus jannaschii (strain ATCC 43067 / DSM 2661 / JAL-1 / JCM 10045 / NBRC 100440) (Methanococcus jannaschii).